Consider the following 174-residue polypeptide: Secreted cysteine-rich protein UMAG_00792 (174 aa).

A signal peptide spans 1–26 (MVSFKSSSLFLHSLSALLVLTTLSSA). N77 is a glycosylation site (N-linked (GlcNAc...) asparagine).

Secreted cysteine-rich proteins (SCRPs) are predicted to form amyloids.

The protein resides in the secreted. In terms of biological role, secreted cysteine-rich protein that might form amyloid strutures which are involved in attachment to hydrophobic surfaces and in formation of hydrophobic aerial hyphae. The polypeptide is Secreted cysteine-rich protein UMAG_00792 (Mycosarcoma maydis (Corn smut fungus)).